A 174-amino-acid chain; its full sequence is NADH-ubiquinone oxidoreductase chain 6 (174 aa).

Helical transmembrane passes span 1-21 (MTYV…GFSS), 24-44 (SPIY…GIVL), 46-66 (FGGS…MLVV), 86-106 (VMIL…VVYM), and 151-171 (WLMV…IEIT).

Belongs to the complex I subunit 6 family. In terms of assembly, core subunit of respiratory chain NADH dehydrogenase (Complex I) which is composed of 45 different subunits.

It localises to the mitochondrion inner membrane. The catalysed reaction is a ubiquinone + NADH + 5 H(+)(in) = a ubiquinol + NAD(+) + 4 H(+)(out). In terms of biological role, core subunit of the mitochondrial membrane respiratory chain NADH dehydrogenase (Complex I) which catalyzes electron transfer from NADH through the respiratory chain, using ubiquinone as an electron acceptor. Essential for the catalytic activity and assembly of complex I. The chain is NADH-ubiquinone oxidoreductase chain 6 (MT-ND6) from Oryctolagus cuniculus (Rabbit).